An 87-amino-acid chain; its full sequence is DNA-directed RNA polymerase subunit omega (87 aa).

Belongs to the RNA polymerase subunit omega family. The RNAP catalytic core consists of 2 alpha, 1 beta, 1 beta' and 1 omega subunit. When a sigma factor is associated with the core the holoenzyme is formed, which can initiate transcription.

The catalysed reaction is RNA(n) + a ribonucleoside 5'-triphosphate = RNA(n+1) + diphosphate. Promotes RNA polymerase assembly. Latches the N- and C-terminal regions of the beta' subunit thereby facilitating its interaction with the beta and alpha subunits. The polypeptide is DNA-directed RNA polymerase subunit omega (Pseudomonas entomophila (strain L48)).